The following is a 131-amino-acid chain: Single-stranded DNA-binding protein 2 (131 aa).

Residues Met-1–Glu-103 form the SSB domain. The Important for interaction with partner proteins signature appears at Glu-126–Phe-131.

Homotetramer.

Functionally, plays an important role in DNA replication, recombination and repair. Binds to ssDNA and to an array of partner proteins to recruit them to their sites of action during DNA metabolism. The sequence is that of Single-stranded DNA-binding protein 2 (ssb2) from Streptococcus agalactiae serotype III (strain NEM316).